Reading from the N-terminus, the 151-residue chain is Cytochrome c-type biogenesis protein CcmE (151 aa).

The Cytoplasmic portion of the chain corresponds to 1-8 (MNPLRKKR). Residues 9 to 29 (LLIILAILVGVGIAVGLALSA) traverse the membrane as a helical; Signal-anchor for type II membrane protein segment. The Periplasmic portion of the chain corresponds to 30 to 151 (LKENINLFYT…QSAPTPAKEG (122 aa)). The heme site is built by His124 and Tyr128. The interval 131-151 (PEVTKALKDSGQSAPTPAKEG) is disordered.

It belongs to the CcmE/CycJ family.

It localises to the cell inner membrane. In terms of biological role, heme chaperone required for the biogenesis of c-type cytochromes. Transiently binds heme delivered by CcmC and transfers the heme to apo-cytochromes in a process facilitated by CcmF and CcmH. This is Cytochrome c-type biogenesis protein CcmE from Pseudomonas fluorescens (strain ATCC BAA-477 / NRRL B-23932 / Pf-5).